Reading from the N-terminus, the 120-residue chain is MTGILCFPPFARFFMLLSGCAWLAGVSSGTSLVASAFSDENQLSEFVHVAEIAQIHRNLRGHINSAIIEANDTSEERMQPNNVVGEGKAPSGAQETVAQILVKGMNKVADFLKDLTRSQK.

Positions 1 to 29 are cleaved as a signal peptide; that stretch reads MTGILCFPPFARFFMLLSGCAWLAGVSSG. Residues 57 to 77 carry the RxLR-dEER motif; that stretch reads RNLRGHINSAIIEANDTSEER. Asn71 is a glycosylation site (N-linked (GlcNAc...) asparagine).

It belongs to the RxLR effector family.

Its subcellular location is the secreted. It is found in the host cytoplasm. The protein localises to the host nucleus. In terms of biological role, secreted effector that does not suppress pattern-triggered immunity (PTI) in plant host. The protein is Secreted RxLR effector protein RXLR-C26 of Plasmopara halstedii (Downy mildew of sunflower).